The following is a 56-amino-acid chain: Large ribosomal subunit protein bL32 (56 aa).

The segment at 1–34 (MAVQQNKKSRSKRGMRRSHDSLSTAQLSVDATSG) is disordered. Basic residues predominate over residues 7–16 (KKSRSKRGMR). The segment covering 21–31 (SLSTAQLSVDA) has biased composition (polar residues).

This sequence belongs to the bacterial ribosomal protein bL32 family.

The chain is Large ribosomal subunit protein bL32 from Shewanella frigidimarina (strain NCIMB 400).